The sequence spans 235 residues: Ubiquinone/menaquinone biosynthesis C-methyltransferase UbiE (235 aa).

Positions 60, 81, and 126 each coordinate S-adenosyl-L-methionine.

Belongs to the class I-like SAM-binding methyltransferase superfamily. MenG/UbiE family.

The catalysed reaction is a 2-demethylmenaquinol + S-adenosyl-L-methionine = a menaquinol + S-adenosyl-L-homocysteine + H(+). It carries out the reaction a 2-methoxy-6-(all-trans-polyprenyl)benzene-1,4-diol + S-adenosyl-L-methionine = a 5-methoxy-2-methyl-3-(all-trans-polyprenyl)benzene-1,4-diol + S-adenosyl-L-homocysteine + H(+). Its pathway is quinol/quinone metabolism; menaquinone biosynthesis; menaquinol from 1,4-dihydroxy-2-naphthoate: step 2/2. It participates in cofactor biosynthesis; ubiquinone biosynthesis. Methyltransferase required for the conversion of demethylmenaquinol (DMKH2) to menaquinol (MKH2) and the conversion of 2-polyprenyl-6-methoxy-1,4-benzoquinol (DDMQH2) to 2-polyprenyl-3-methyl-6-methoxy-1,4-benzoquinol (DMQH2). The polypeptide is Ubiquinone/menaquinone biosynthesis C-methyltransferase UbiE (Citrifermentans bemidjiense (strain ATCC BAA-1014 / DSM 16622 / JCM 12645 / Bem) (Geobacter bemidjiensis)).